A 172-amino-acid polypeptide reads, in one-letter code: Ribosome maturation factor RimM (172 aa).

The PRC barrel domain maps to Ala95–Leu168.

It belongs to the RimM family. In terms of assembly, binds ribosomal protein uS19.

It is found in the cytoplasm. Its function is as follows. An accessory protein needed during the final step in the assembly of 30S ribosomal subunit, possibly for assembly of the head region. Essential for efficient processing of 16S rRNA. May be needed both before and after RbfA during the maturation of 16S rRNA. It has affinity for free ribosomal 30S subunits but not for 70S ribosomes. In Streptococcus equi subsp. equi (strain 4047), this protein is Ribosome maturation factor RimM.